The following is a 209-amino-acid chain: Thymidylate kinase (209 aa).

ATP is bound at residue 11–18 (GIEGAGKT).

This sequence belongs to the thymidylate kinase family.

The catalysed reaction is dTMP + ATP = dTDP + ADP. Functionally, phosphorylation of dTMP to form dTDP in both de novo and salvage pathways of dTTP synthesis. The chain is Thymidylate kinase (tmk) from Pasteurella multocida (strain Pm70).